Reading from the N-terminus, the 150-residue chain is MFDLSWSEIALVGVVALIVIGPKDLPNVLRTAGKWVRKIRSLGSEFQRQMDDVMRETGAEDVRRQVTTLARTDVGRKIDQAIDPDGKLAASLSSVPPPSPAGPFGTSPAAPPSLPPQAPAQPVPPATGAAPPSPSAGPDRRTDGSLPPQD.

The chain crosses the membrane as a helical span at residues 1–21; the sequence is MFDLSWSEIALVGVVALIVIG. Residues 77-86 show a composition bias toward basic and acidic residues; that stretch reads KIDQAIDPDG. The tract at residues 77-150 is disordered; it reads KIDQAIDPDG…RTDGSLPPQD (74 aa). Pro residues predominate over residues 109 to 135; it reads AAPPSLPPQAPAQPVPPATGAAPPSPS.

Belongs to the TatB family. In terms of assembly, the Tat system comprises two distinct complexes: a TatABC complex, containing multiple copies of TatA, TatB and TatC subunits, and a separate TatA complex, containing only TatA subunits. Substrates initially bind to the TatABC complex, which probably triggers association of the separate TatA complex to form the active translocon.

It localises to the cell inner membrane. Functionally, part of the twin-arginine translocation (Tat) system that transports large folded proteins containing a characteristic twin-arginine motif in their signal peptide across membranes. Together with TatC, TatB is part of a receptor directly interacting with Tat signal peptides. TatB may form an oligomeric binding site that transiently accommodates folded Tat precursor proteins before their translocation. The sequence is that of Sec-independent protein translocase protein TatB from Rhodospirillum rubrum (strain ATCC 11170 / ATH 1.1.1 / DSM 467 / LMG 4362 / NCIMB 8255 / S1).